We begin with the raw amino-acid sequence, 452 residues long: MTLPIVAIIGRPNVGKSTLVNRLAGDQQAIVHDEPGITRDRTYRPAFWQDRDFQVVDTGGLVFDDDTEFLPLIREQAMTALAEAHAAIFVVDGQTGPTPADEEIANWLRSQSVPIILAVNKCESVEQGLIQASEFWQLGLGEPYPISSIHGSGTGELLDKLIIYLPTTESLSETNEIKVAIVGRPNVGKSSLLNALTGENRAIVSPISGTTRDAIDMVVQRNEQQYRLIDTAGIRRKKNVEYGAEFFSINRAFKAIRRADVVLFVIDALDGITDQDLKLAGRISDEGRATVLVINKWDAVDKDSYTIYEYQKMLESRLYFMDWAEMIFVSALTGKRVEKILDLVDNATASHRRRVSTAVINEVLQEATTWHSPPTTRQGKQGKIYYGTQIKSEPPTITLFVNDPKRFNDNYRRYIERQFRQQLGFTGTPIRLIWRGKSTREVERTTNRATRV.

EngA-type G domains follow at residues proline 4–glutamate 169 and isoleucine 177–arginine 352. Residues glycine 10 to serine 17, aspartate 57 to leucine 61, asparagine 120 to glutamate 123, glycine 183 to serine 190, aspartate 230 to isoleucine 234, and asparagine 295 to aspartate 298 contribute to the GTP site. The region spanning arginine 353–serine 438 is the KH-like domain.

Belongs to the TRAFAC class TrmE-Era-EngA-EngB-Septin-like GTPase superfamily. EngA (Der) GTPase family. In terms of assembly, associates with the 50S ribosomal subunit.

Its function is as follows. GTPase that plays an essential role in the late steps of ribosome biogenesis. This chain is GTPase Der, found in Gloeothece citriformis (strain PCC 7424) (Cyanothece sp. (strain PCC 7424)).